Here is a 164-residue protein sequence, read N- to C-terminus: UPF0304 protein YfbU (164 aa).

Belongs to the UPF0304 family.

The protein is UPF0304 protein YfbU of Escherichia coli O127:H6 (strain E2348/69 / EPEC).